The following is a 367-amino-acid chain: Germination protease (367 aa).

Positions Met-1–Asp-15 are excised as a propeptide.

This sequence belongs to the peptidase A25 family. In terms of assembly, homotetramer. Autoproteolytically processed. The inactive tetrameric zymogen termed p46 autoprocesses to a smaller form termed p41, which is active only during spore germination.

The catalysed reaction is Endopeptidase action with P4 Glu or Asp, P1 preferably Glu &gt; Asp, P1' hydrophobic and P2' Ala.. Its function is as follows. Initiates the rapid degradation of small, acid-soluble proteins during spore germination. The chain is Germination protease from Bacillus cereus (strain G9842).